The chain runs to 330 residues: Methylthioribose-1-phosphate isomerase (330 aa).

Residues 49 to 51, Arg-83, and Gln-179 contribute to the substrate site; that span reads RGA. The active-site Proton donor is Asp-220. 230–231 is a substrate binding site; that stretch reads NK.

Belongs to the eIF-2B alpha/beta/delta subunits family. MtnA subfamily.

It catalyses the reaction 5-(methylsulfanyl)-alpha-D-ribose 1-phosphate = 5-(methylsulfanyl)-D-ribulose 1-phosphate. The protein operates within amino-acid biosynthesis; L-methionine biosynthesis via salvage pathway; L-methionine from S-methyl-5-thio-alpha-D-ribose 1-phosphate: step 1/6. Its function is as follows. Catalyzes the interconversion of methylthioribose-1-phosphate (MTR-1-P) into methylthioribulose-1-phosphate (MTRu-1-P). This is Methylthioribose-1-phosphate isomerase from Thermus thermophilus (strain ATCC BAA-163 / DSM 7039 / HB27).